Consider the following 99-residue polypeptide: DNA-directed RNA polymerase subunit omega (99 aa).

It belongs to the RNA polymerase subunit omega family. In terms of assembly, the RNAP catalytic core consists of 2 alpha, 1 beta, 1 beta' and 1 omega subunit. When a sigma factor is associated with the core the holoenzyme is formed, which can initiate transcription.

It carries out the reaction RNA(n) + a ribonucleoside 5'-triphosphate = RNA(n+1) + diphosphate. Its function is as follows. Promotes RNA polymerase assembly. Latches the N- and C-terminal regions of the beta' subunit thereby facilitating its interaction with the beta and alpha subunits. In Xylella fastidiosa (strain 9a5c), this protein is DNA-directed RNA polymerase subunit omega (rpoZ).